A 104-amino-acid polypeptide reads, in one-letter code: Small ribosomal subunit protein bS16 (104 aa).

It belongs to the bacterial ribosomal protein bS16 family.

The chain is Small ribosomal subunit protein bS16 from Wolbachia pipientis subsp. Culex pipiens (strain wPip).